A 177-amino-acid chain; its full sequence is Large ribosomal subunit protein uL6 (177 aa).

The protein belongs to the universal ribosomal protein uL6 family. In terms of assembly, part of the 50S ribosomal subunit.

This protein binds to the 23S rRNA, and is important in its secondary structure. It is located near the subunit interface in the base of the L7/L12 stalk, and near the tRNA binding site of the peptidyltransferase center. The protein is Large ribosomal subunit protein uL6 of Histophilus somni (strain 129Pt) (Haemophilus somnus).